Here is a 413-residue protein sequence, read N- to C-terminus: MSTDPTSKPAFPITDEIRHALAVTKRGVDELLIEEEFAQKLARSAATGKPLRIKLGLDPTAPDIHLGHTVVLNKMRQLQDLGHTVIFLIGDFTSLIGDPSGRNATRPPLTREQIESNAKTYFEQAALVLDREKTEIRYNSEWSMPLGADGMIKLASRYTVARMLEREDFTKRFQGGIPISIHEFLYPLMQGYDSVALNADLELGGTDQKFNLLVGRELQKQYGQEQQCILTMPLLEGLDGVEKMSKSKGNYVGIGEKPNDMFGKLMSISDVLMWRYFELLSFRSLDEIARLRGEAEGGRNPRDFKVMLAQEIVARFHSQADAERALEDFNHRAKGGVPDDIPTVTLAGAPLAIGQLLKQAGLVPSTSEALRNIEQGGVKIDGATVSDKALKVDAGEFVVQVGKRRFARVTLTA.

The short motif at 59 to 68 (PTAPDIHLGH) is the 'HIGH' region element. The 'KMSKS' region signature appears at 243-247 (KMSKS). K246 contributes to the ATP binding site. The S4 RNA-binding domain maps to 351 to 411 (LAIGQLLKQA…GKRRFARVTL (61 aa)).

The protein belongs to the class-I aminoacyl-tRNA synthetase family. TyrS type 2 subfamily. As to quaternary structure, homodimer.

It is found in the cytoplasm. It carries out the reaction tRNA(Tyr) + L-tyrosine + ATP = L-tyrosyl-tRNA(Tyr) + AMP + diphosphate + H(+). In terms of biological role, catalyzes the attachment of tyrosine to tRNA(Tyr) in a two-step reaction: tyrosine is first activated by ATP to form Tyr-AMP and then transferred to the acceptor end of tRNA(Tyr). This Burkholderia thailandensis (strain ATCC 700388 / DSM 13276 / CCUG 48851 / CIP 106301 / E264) protein is Tyrosine--tRNA ligase.